A 288-amino-acid polypeptide reads, in one-letter code: Ribosomal protein L11 methyltransferase (288 aa).

S-adenosyl-L-methionine-binding residues include Thr-134, Gly-157, Asp-179, and Asn-224.

This sequence belongs to the methyltransferase superfamily. PrmA family.

It localises to the cytoplasm. The enzyme catalyses L-lysyl-[protein] + 3 S-adenosyl-L-methionine = N(6),N(6),N(6)-trimethyl-L-lysyl-[protein] + 3 S-adenosyl-L-homocysteine + 3 H(+). Functionally, methylates ribosomal protein L11. The sequence is that of Ribosomal protein L11 methyltransferase from Caulobacter sp. (strain K31).